Consider the following 77-residue polypeptide: Large ribosomal subunit protein uL29 (77 aa).

This sequence belongs to the universal ribosomal protein uL29 family.

This Mycobacterium bovis (strain ATCC BAA-935 / AF2122/97) protein is Large ribosomal subunit protein uL29 (rpmC).